The following is a 512-amino-acid chain: Replication initiation protein (512 aa).

Essential for replication. Binds specifically to a 60-bp region corresponding to the putative origin of replication of pXO2. Also binds nonspecifically to single-stranded DNA with lower affinity. This Bacillus anthracis protein is Replication initiation protein (repS).